Reading from the N-terminus, the 377-residue chain is 5-hydroxytryptamine receptor 1D (377 aa).

3 N-linked (GlcNAc...) asparagine glycosylation sites follow: asparagine 5, asparagine 17, and asparagine 21. 3 consecutive transmembrane segments (helical) span residues 39–64 (ISLA…TTIL), 76–97 (LIGS…ISIA), and 110–134 (LCDI…VIAL). Cysteines 111 and 188 form a disulfide. 2 residues coordinate serotonin: aspartate 118 and cysteine 122. Residues 135–137 (DRY) carry the DRY motif; important for ligand-induced conformation changes motif. Helical transmembrane passes span 155–176 (AAAM…PLFW), 195–218 (ISYT…VLYG), 301–326 (KTLG…VLPI), and 336–359 (GLFD…YTVF). Residue serine 321 coordinates serotonin. An NPxxY motif; important for ligand-induced conformation changes and signaling motif is present at residues 352-356 (NPIIY).

Belongs to the G-protein coupled receptor 1 family. In terms of assembly, homodimer. Heterodimer with HTR1B.

It localises to the cell membrane. In terms of biological role, G-protein coupled receptor for 5-hydroxytryptamine (serotonin). Also functions as a receptor for ergot alkaloid derivatives, various anxiolytic and antidepressant drugs and other psychoactive substances. Ligand binding causes a conformation change that triggers signaling via guanine nucleotide-binding proteins (G proteins) and modulates the activity of downstream effectors, such as adenylate cyclase. HTR1D is coupled to G(i)/G(o) G alpha proteins and mediates inhibitory neurotransmission by inhibiting adenylate cyclase activity. Regulates the release of 5-hydroxytryptamine in the brain, and thereby affects neural activity. May also play a role in regulating the release of other neurotransmitters. May play a role in vasoconstriction. This Oryctolagus cuniculus (Rabbit) protein is 5-hydroxytryptamine receptor 1D (HTR1D).